Reading from the N-terminus, the 526-residue chain is Sugar transport protein 13 (526 aa).

Residues 1–18 (MTGGGFATSANGVEFEAK) lie on the Cytoplasmic side of the membrane. A helical membrane pass occupies residues 19 to 39 (ITPIVIISCIMAATGGLMFGY). Over 40–81 (DVGVSGGVTSMPDFLEKFFPVVYRKVVAGADKDSNYCKYDNQ) the chain is Extracellular. Residues 82 to 102 (GLQLFTSSLYLAGLTATFFAS) form a helical membrane-spanning segment. At 103-111 (YTTRTLGRR) the chain is on the cytoplasmic side. Residues 112 to 132 (LTMLIAGVFFIIGVALNAGAQ) traverse the membrane as a helical segment. At 133–141 (DLAMLIAGR) the chain is on the extracellular side. The chain crosses the membrane as a helical span at residues 142 to 162 (ILLGCGVGFANQAVPLFLSEI). The Cytoplasmic portion of the chain corresponds to 163–168 (APTRIR). Residues 169-189 (GGLNILFQLNVTIGILFANLV) form a helical membrane-spanning segment. The Extracellular portion of the chain corresponds to 190–203 (NYGTAKIKGGWGWR). A helical membrane pass occupies residues 204-224 (LSLGLAGIPALLLTVGALLVT). Over 225-296 (ETPNSLVERG…IAVALQIFQQ (72 aa)) the chain is Cytoplasmic. The helical transmembrane segment at 297–317 (CTGINAIMFYAPVLFSTLGFG) threads the bilayer. Residues 318–319 (SD) lie on the Extracellular side of the membrane. Residues 320–340 (ASLYSAVVTGAVNVLSTLVSI) traverse the membrane as a helical segment. At 341–349 (YSVDKVGRR) the chain is on the cytoplasmic side. Residues 350-370 (VLLLEAGVQMFFSQVVIAIIL) form a helical membrane-spanning segment. At 371-383 (GVKVTDTSTNLSK) the chain is on the extracellular side. The helical transmembrane segment at 384 to 404 (GFAILVVVMICTYVAAFAWSW) threads the bilayer. Over 405-426 (GPLGWLIPSETFPLETRSAGQS) the chain is Cytoplasmic. The helical transmembrane segment at 427–447 (VTVCVNLLFTFIIAQAFLSML) threads the bilayer. The Extracellular segment spans residues 448–451 (CHFK). A helical transmembrane segment spans residues 452–472 (FGIFIFFSAWVLIMSVFVMFL). Topologically, residues 473-526 (LPETKNIPIEEMTERVWKKHWFWARFMDDHNDHEFVNGEKSNGKSNGFDPSTRL) are cytoplasmic.

Belongs to the major facilitator superfamily. Sugar transporter (TC 2.A.1.1) family.

It is found in the cell membrane. Its function is as follows. Mediates an active uptake of hexoses, probably by sugar/hydrogen symport. The protein is Sugar transport protein 13 (STP13) of Arabidopsis thaliana (Mouse-ear cress).